Reading from the N-terminus, the 272-residue chain is Ethanolamine ammonia-lyase small subunit (272 aa).

Adenosylcob(III)alamin contacts are provided by valine 161, glutamate 182, and cysteine 211.

It belongs to the EutC family. As to quaternary structure, the basic unit is a heterodimer which dimerizes to form tetramers. The heterotetramers trimerize; 6 large subunits form a core ring with 6 small subunits projecting outwards. Adenosylcob(III)alamin is required as a cofactor.

The protein localises to the bacterial microcompartment. The enzyme catalyses ethanolamine = acetaldehyde + NH4(+). Its pathway is amine and polyamine degradation; ethanolamine degradation. Catalyzes the deamination of various vicinal amino-alcohols to oxo compounds. Allows this organism to utilize ethanolamine as the sole source of nitrogen and carbon in the presence of external vitamin B12. This chain is Ethanolamine ammonia-lyase small subunit, found in Pseudomonas putida (strain W619).